Consider the following 179-residue polypeptide: Low molecular weight phosphotyrosine protein phosphatase (179 aa).

The active-site Nucleophile is cysteine 15. Residue arginine 21 is part of the active site. Catalysis depends on aspartate 148, which acts as the Proton donor.

The protein belongs to the low molecular weight phosphotyrosine protein phosphatase family.

The protein localises to the cytoplasm. It carries out the reaction O-phospho-L-tyrosyl-[protein] + H2O = L-tyrosyl-[protein] + phosphate. The enzyme catalyses a phosphate monoester + H2O = an alcohol + phosphate. Its function is as follows. Acts on tyrosine phosphorylated proteins, low-MW aryl phosphates and natural and synthetic acyl phosphates. This Dictyostelium discoideum (Social amoeba) protein is Low molecular weight phosphotyrosine protein phosphatase (acp1).